The sequence spans 492 residues: Transmembrane protein 39B (492 aa).

The disordered stretch occupies residues 1–53 (MGGRRGPNRTSYYRNPLCEPGSSGASGGGHSSSASVSSVRSRSRTTSGTGLSS). A glycan (N-linked (GlcNAc...) asparagine) is linked at asparagine 8. Residues 31 to 53 (SSSASVSSVRSRSRTTSGTGLSS) show a composition bias toward low complexity. Transmembrane regions (helical) follow at residues 77 to 97 (SILF…VHYI), 115 to 135 (TSLN…IVLG), 153 to 175 (SLFR…GWSL), 185 to 205 (TYSF…IPFL), 288 to 308 (EVLV…VWFV), 322 to 342 (LFLL…LPAS), 421 to 441 (ILNI…YSLM), and 447 to 467 (HQTI…FKLL).

Belongs to the TMEM39 family.

It is found in the endoplasmic reticulum membrane. May protect the cells against DNA damage caused by exposure to the cold-warming stress and facilitates tissue damage repair during the recovery phase. In Rattus norvegicus (Rat), this protein is Transmembrane protein 39B.